We begin with the raw amino-acid sequence, 478 residues long: Kynureninase (478 aa).

Pyridoxal 5'-phosphate is bound by residues L138, T139, 166–169 (FPSD), D252, H255, and Y277. K278 bears the N6-(pyridoxal phosphate)lysine mark. Positions 315 and 343 each coordinate pyridoxal 5'-phosphate.

Belongs to the kynureninase family. In terms of assembly, homodimer. Requires pyridoxal 5'-phosphate as cofactor.

The protein resides in the cytoplasm. The enzyme catalyses L-kynurenine + H2O = anthranilate + L-alanine + H(+). It carries out the reaction 3-hydroxy-L-kynurenine + H2O = 3-hydroxyanthranilate + L-alanine + H(+). The protein operates within amino-acid degradation; L-kynurenine degradation; L-alanine and anthranilate from L-kynurenine: step 1/1. It participates in cofactor biosynthesis; NAD(+) biosynthesis; quinolinate from L-kynurenine: step 2/3. In terms of biological role, catalyzes the cleavage of L-kynurenine (L-Kyn) and L-3-hydroxykynurenine (L-3OHKyn) into anthranilic acid (AA) and 3-hydroxyanthranilic acid (3-OHAA), respectively. In Coccidioides immitis (strain RS) (Valley fever fungus), this protein is Kynureninase.